Reading from the N-terminus, the 259-residue chain is 5'-nucleotidase SurE (259 aa).

A divalent metal cation contacts are provided by aspartate 13, aspartate 14, serine 44, and asparagine 101.

Belongs to the SurE nucleotidase family. A divalent metal cation is required as a cofactor.

The protein localises to the cytoplasm. It carries out the reaction a ribonucleoside 5'-phosphate + H2O = a ribonucleoside + phosphate. In terms of biological role, nucleotidase that shows phosphatase activity on nucleoside 5'-monophosphates. The chain is 5'-nucleotidase SurE from Flavobacterium johnsoniae (strain ATCC 17061 / DSM 2064 / JCM 8514 / BCRC 14874 / CCUG 350202 / NBRC 14942 / NCIMB 11054 / UW101) (Cytophaga johnsonae).